Reading from the N-terminus, the 293-residue chain is MEGLAIRASRPSVFCSIPGLGGDSHRKPPSDGFLKLPASSIPADSRKLVANSTSFHPISAVNVSAQASLTADFPALSETILKEGRNNGKEKAENIVWHESSICRCDRQQLLQQKGCVVWITGLSGSGKSTVACALSKALFERGKLTYTLDGDNVRHGLNRDLTFKAEHRTENIRRIGEVAKLFADVGVICIASLISPYRRDRDACRSLLPDGDFVEVFMDVPLHVCESRDPKGLYKLARAGKIKGFTGIDDPYEAPVNCEVVLKHTGDDESCSPRQMAENIISYLQNKGYLEG.

A chloroplast-targeting transit peptide spans 1–59 (MEGLAIRASRPSVFCSIPGLGGDSHRKPPSDGFLKLPASSIPADSRKLVANSTSFHPIS). ATP is bound at residue 122 to 130 (GLSGSGKST). Residues Asp152, Arg155, Arg169, Asn172, 195 to 196 (IS), and Gly245 contribute to the substrate site. Ser196 (phosphoserine intermediate) is an active-site residue.

Belongs to the APS kinase family. Interacts with APK1. As to expression, expressed in root vasculature, root tips, leaf epidermal cells and funiculus of developing seeds.

It localises to the plastid. Its subcellular location is the chloroplast. The enzyme catalyses adenosine 5'-phosphosulfate + ATP = 3'-phosphoadenylyl sulfate + ADP + H(+). The protein operates within sulfur metabolism; hydrogen sulfide biosynthesis; sulfite from sulfate: step 2/3. In terms of biological role, catalyzes the synthesis of activated sulfate. Essential for plant reproduction and viability. Required for the production of glucosinolates. The protein is Adenylyl-sulfate kinase 2, chloroplastic (APK2) of Arabidopsis thaliana (Mouse-ear cress).